A 623-amino-acid polypeptide reads, in one-letter code: tRNA uridine 5-carboxymethylaminomethyl modification enzyme MnmG (623 aa).

12–17 (GAGHAG) serves as a coordination point for FAD. Position 272 to 286 (272 to 286 (GPRYCPSIEDKINRF)) interacts with NAD(+).

The protein belongs to the MnmG family. As to quaternary structure, homodimer. Heterotetramer of two MnmE and two MnmG subunits. FAD serves as cofactor.

It is found in the cytoplasm. Its function is as follows. NAD-binding protein involved in the addition of a carboxymethylaminomethyl (cmnm) group at the wobble position (U34) of certain tRNAs, forming tRNA-cmnm(5)s(2)U34. This Flavobacterium psychrophilum (strain ATCC 49511 / DSM 21280 / CIP 103535 / JIP02/86) protein is tRNA uridine 5-carboxymethylaminomethyl modification enzyme MnmG.